Reading from the N-terminus, the 467-residue chain is Dihydrolipoyl dehydrogenase 3 (467 aa).

FAD is bound by residues 34-43, K52, and A116; that span reads EGRETLGGTC. C43 and C48 are disulfide-bonded. NAD(+) is bound by residues 182-186, E205, V239, and 272-275; these read GAGVI and AIGR. Residues D314 and A322 each coordinate FAD. H446 acts as the Proton acceptor in catalysis.

This sequence belongs to the class-I pyridine nucleotide-disulfide oxidoreductase family. As to quaternary structure, homodimer. It depends on FAD as a cofactor.

The protein resides in the cytoplasm. It carries out the reaction N(6)-[(R)-dihydrolipoyl]-L-lysyl-[protein] + NAD(+) = N(6)-[(R)-lipoyl]-L-lysyl-[protein] + NADH + H(+). Functionally, LPD-3 may substitute for lipoamide dehydrogenase of the 2-oxoglutarate dehydrogenase and pyruvate multienzyme complexes when the latter is inactive or missing. The chain is Dihydrolipoyl dehydrogenase 3 (lpd3) from Pseudomonas aeruginosa (strain ATCC 15692 / DSM 22644 / CIP 104116 / JCM 14847 / LMG 12228 / 1C / PRS 101 / PAO1).